The primary structure comprises 525 residues: GMP synthase [glutamine-hydrolyzing] (525 aa).

In terms of domain architecture, Glutamine amidotransferase type-1 spans 9 to 207 (RILILDFGSQ…VHEICGCPAD (199 aa)). Residue C86 is the Nucleophile of the active site. Catalysis depends on residues H181 and E183. Residues 208–400 (WTPGNIVDDL…LGLPADMVYR (193 aa)) form the GMPS ATP-PPase domain. Residue 235-241 (SGGVDSS) participates in ATP binding.

As to quaternary structure, homodimer.

The enzyme catalyses XMP + L-glutamine + ATP + H2O = GMP + L-glutamate + AMP + diphosphate + 2 H(+). It participates in purine metabolism; GMP biosynthesis; GMP from XMP (L-Gln route): step 1/1. Catalyzes the synthesis of GMP from XMP. The protein is GMP synthase [glutamine-hydrolyzing] of Alkalilimnicola ehrlichii (strain ATCC BAA-1101 / DSM 17681 / MLHE-1).